Consider the following 103-residue polypeptide: Pyrimidine/purine nucleoside phosphorylase (103 aa).

It belongs to the nucleoside phosphorylase PpnP family.

It carries out the reaction a purine D-ribonucleoside + phosphate = a purine nucleobase + alpha-D-ribose 1-phosphate. The catalysed reaction is adenosine + phosphate = alpha-D-ribose 1-phosphate + adenine. The enzyme catalyses cytidine + phosphate = cytosine + alpha-D-ribose 1-phosphate. It catalyses the reaction guanosine + phosphate = alpha-D-ribose 1-phosphate + guanine. It carries out the reaction inosine + phosphate = alpha-D-ribose 1-phosphate + hypoxanthine. The catalysed reaction is thymidine + phosphate = 2-deoxy-alpha-D-ribose 1-phosphate + thymine. The enzyme catalyses uridine + phosphate = alpha-D-ribose 1-phosphate + uracil. It catalyses the reaction xanthosine + phosphate = alpha-D-ribose 1-phosphate + xanthine. In terms of biological role, catalyzes the phosphorolysis of diverse nucleosides, yielding D-ribose 1-phosphate and the respective free bases. Can use uridine, adenosine, guanosine, cytidine, thymidine, inosine and xanthosine as substrates. Also catalyzes the reverse reactions. This is Pyrimidine/purine nucleoside phosphorylase from Laribacter hongkongensis (strain HLHK9).